Reading from the N-terminus, the 308-residue chain is Methionyl-tRNA formyltransferase (308 aa).

110-113 serves as a coordination point for (6S)-5,6,7,8-tetrahydrofolate; that stretch reads SLLP.

Belongs to the Fmt family.

It carries out the reaction L-methionyl-tRNA(fMet) + (6R)-10-formyltetrahydrofolate = N-formyl-L-methionyl-tRNA(fMet) + (6S)-5,6,7,8-tetrahydrofolate + H(+). Functionally, attaches a formyl group to the free amino group of methionyl-tRNA(fMet). The formyl group appears to play a dual role in the initiator identity of N-formylmethionyl-tRNA by promoting its recognition by IF2 and preventing the misappropriation of this tRNA by the elongation apparatus. The protein is Methionyl-tRNA formyltransferase of Neisseria meningitidis serogroup A / serotype 4A (strain DSM 15465 / Z2491).